The sequence spans 153 residues: 6,7-dimethyl-8-ribityllumazine synthase (153 aa).

Residues Phe22, 56–58 (AFE), and 80–82 (TVI) each bind 5-amino-6-(D-ribitylamino)uracil. 85–86 (ST) contributes to the (2S)-2-hydroxy-3-oxobutyl phosphate binding site. The active-site Proton donor is the His88. Phe113 contacts 5-amino-6-(D-ribitylamino)uracil. Arg127 contacts (2S)-2-hydroxy-3-oxobutyl phosphate.

It belongs to the DMRL synthase family. Forms an icosahedral capsid composed of 60 subunits, arranged as a dodecamer of pentamers.

It catalyses the reaction (2S)-2-hydroxy-3-oxobutyl phosphate + 5-amino-6-(D-ribitylamino)uracil = 6,7-dimethyl-8-(1-D-ribityl)lumazine + phosphate + 2 H2O + H(+). It participates in cofactor biosynthesis; riboflavin biosynthesis; riboflavin from 2-hydroxy-3-oxobutyl phosphate and 5-amino-6-(D-ribitylamino)uracil: step 1/2. In terms of biological role, catalyzes the formation of 6,7-dimethyl-8-ribityllumazine by condensation of 5-amino-6-(D-ribitylamino)uracil with 3,4-dihydroxy-2-butanone 4-phosphate. This is the penultimate step in the biosynthesis of riboflavin. This Glaesserella parasuis serovar 5 (strain SH0165) (Haemophilus parasuis) protein is 6,7-dimethyl-8-ribityllumazine synthase.